A 30-amino-acid chain; its full sequence is Platelet factor 4 (30 aa).

This sequence belongs to the intercrine alpha (chemokine CxC) family. As to quaternary structure, homotetramer. Interacts with TNFAIP6 (via Link domain). Interacts with CCR1. Interacts with CXCR3. In terms of processing, binds non-covalently to a proteoglycan molecule.

The protein resides in the secreted. Functionally, chemokine released during platelet aggregation that plays a role in different biological processes including hematopoiesis, cell proliferation, differentiation, and activation. Acts via different functional receptors including CCR1, CXCR3A or CXCR3B. Upon interaction with CXCR3A receptor, induces activated T-lymphocytes migration mediated via downstream Ras/extracellular signal-regulated kinase (ERK) signaling. Neutralizes the anticoagulant effect of heparin by binding more strongly to heparin than to the chondroitin-4-sulfate chains of the carrier molecule. Plays a role in the inhibition of hematopoiesis and in the maintenance of hematopoietic stem cell (HSC) quiescence. Chemotactic for neutrophils and monocytes via CCR1. Inhibits endothelial cell proliferation. In cooperation with toll-like receptor 8/TLR8, induces chromatin remodeling and activates inflammatory gene expression via the TBK1-IRF5 axis. In addition, induces myofibroblast differentiation and collagen synthesis in different precursor cells, including endothelial cells, by stimulating endothelial-to-mesenchymal transition. The chain is Platelet factor 4 (PF4) from Oryctolagus cuniculus (Rabbit).